The sequence spans 242 residues: Serine hydrolase cnsH (242 aa).

Active-site charge relay system residues include serine 56, aspartate 138, and histidine 216.

The protein belongs to the AB hydrolase 3 family.

The protein operates within alkaloid biosynthesis. Serine hydrolase; part of the gene cluster that mediates the biosynthesis of communesins, a prominent class of indole alkaloids with great potential as pharmaceuticals. Communesins are biosynthesized by the coupling of tryptamine and aurantioclavine, two building blocks derived from L-tryptophan. The L-tryptophan decarboxylase cnsB converts L-tryptophan to tryptamine, whereas the tryptophan dimethylallyltransferase cnsF converts L-tryptophan to 4-dimethylallyl tryptophan which is further transformed to aurantioclavine by the aurantioclavine synthase cnsA, probably aided by the catalase cnsD. The cytochrome P450 monooxygenase cnsC catalyzes the heterodimeric coupling between the two different indole moieties, tryptamine and aurantioclavine, to construct vicinal quaternary stereocenters and yield the heptacyclic communesin scaffold. The O-methyltransferase cnsE then methylates the communesin scaffold to produce communesin K, the simplest characterized communesin that contains the heptacyclic core. The dioxygenase cnsJ converts communesin K into communesin I. Acylation to introduce the hexadienyl group at position N16 of communesin I by the acyltransferase cnsK leads to the production of communesin B. The hexadienyl group is produced by the highly reducing polyketide synthase cnsI, before being hydrolytically removed from cnsI by the serine hydrolase cnsH, converted into hexadienyl-CoA by the CoA ligase cnsG, and then transferred to communesin I by cnsK. Surprisingly, cnsK may also be a promiscuous acyltransferase that can tolerate a range of acyl groups, including acetyl-, propionyl-, and butyryl-CoA, which lead to communesins A, G and H respectively. The roles of the alpha-ketoglutarate-dependent dioxygenases cnsM and cnsP have still to be determined. This is Serine hydrolase cnsH from Penicillium expansum (Blue mold rot fungus).